Consider the following 168-residue polypeptide: Putative adenylate kinase (168 aa).

ATP is bound by residues Gly10, Gly12, Lys13, Thr14, and Thr15. Positions 28–51 (HLNERIREEGLDAGRDEERDSLVA) are NMP. The segment at 97-107 (DRGEPAAKAAE) is LID. Residue Arg98 coordinates ATP.

The protein belongs to the adenylate kinase family. AK6 subfamily. In terms of assembly, interacts with uS11. Not a structural component of 40S pre-ribosomes, but transiently interacts with them by binding to uS11.

It carries out the reaction AMP + ATP = 2 ADP. It catalyses the reaction ATP + H2O = ADP + phosphate + H(+). Functionally, broad-specificity nucleoside monophosphate (NMP) kinase that catalyzes the reversible transfer of the terminal phosphate group between nucleoside triphosphates and monophosphates. Also has ATPase activity. Involved in the late maturation steps of the 30S ribosomal particles, specifically 16S rRNA maturation. While NMP activity is not required for ribosome maturation, ATPase activity is. Associates transiently with small ribosomal subunit protein uS11. ATP hydrolysis breaks the interaction with uS11. May temporarily remove uS11 from the ribosome to enable a conformational change of the ribosomal RNA that is needed for the final maturation step of the small ribosomal subunit. In Natronomonas pharaonis (strain ATCC 35678 / DSM 2160 / CIP 103997 / JCM 8858 / NBRC 14720 / NCIMB 2260 / Gabara) (Halobacterium pharaonis), this protein is Putative adenylate kinase.